Consider the following 230-residue polypeptide: Flavin-dependent thymidylate synthase (230 aa).

The ThyX domain maps to 1 to 217 (MEIKVLEKGF…PVTYEAFLNF (217 aa)). Residues Ser55, 78 to 80 (RHR), and Glu86 each bind FAD. Residues 75–78 (QLVR), 86–90 (ERSGR), and Arg156 contribute to the dUMP site. Residues 78–88 (RHRIASINERS) carry the ThyX motif motif. Residues 172 to 174 (NAR) and Asn178 each bind FAD. Arg183 contributes to the dUMP binding site. Catalysis depends on Arg183, which acts as the Involved in ionization of N3 of dUMP, leading to its activation.

This sequence belongs to the thymidylate synthase ThyX family. Homotetramer. FAD is required as a cofactor.

The catalysed reaction is dUMP + (6R)-5,10-methylene-5,6,7,8-tetrahydrofolate + NADPH + H(+) = dTMP + (6S)-5,6,7,8-tetrahydrofolate + NADP(+). Its pathway is pyrimidine metabolism; dTTP biosynthesis. Its function is as follows. Catalyzes the reductive methylation of 2'-deoxyuridine-5'-monophosphate (dUMP) to 2'-deoxythymidine-5'-monophosphate (dTMP) while utilizing 5,10-methylenetetrahydrofolate (mTHF) as the methyl donor, and NADPH and FADH(2) as the reductant. The chain is Flavin-dependent thymidylate synthase from Kosmotoga olearia (strain ATCC BAA-1733 / DSM 21960 / TBF 19.5.1).